Consider the following 255-residue polypeptide: UDP-2,3-diacylglucosamine hydrolase (255 aa).

5 residues coordinate Mn(2+): aspartate 8, histidine 10, aspartate 41, asparagine 79, and histidine 114. Position 79–80 (79–80 (NR)) interacts with substrate. Substrate contacts are provided by aspartate 122, serine 160, asparagine 164, lysine 167, and histidine 195. 2 residues coordinate Mn(2+): histidine 195 and histidine 197.

This sequence belongs to the LpxH family. Mn(2+) is required as a cofactor.

It localises to the cell inner membrane. The catalysed reaction is UDP-2-N,3-O-bis[(3R)-3-hydroxytetradecanoyl]-alpha-D-glucosamine + H2O = 2-N,3-O-bis[(3R)-3-hydroxytetradecanoyl]-alpha-D-glucosaminyl 1-phosphate + UMP + 2 H(+). Its pathway is glycolipid biosynthesis; lipid IV(A) biosynthesis; lipid IV(A) from (3R)-3-hydroxytetradecanoyl-[acyl-carrier-protein] and UDP-N-acetyl-alpha-D-glucosamine: step 4/6. In terms of biological role, hydrolyzes the pyrophosphate bond of UDP-2,3-diacylglucosamine to yield 2,3-diacylglucosamine 1-phosphate (lipid X) and UMP by catalyzing the attack of water at the alpha-P atom. Involved in the biosynthesis of lipid A, a phosphorylated glycolipid that anchors the lipopolysaccharide to the outer membrane of the cell. The protein is UDP-2,3-diacylglucosamine hydrolase of Hamiltonella defensa subsp. Acyrthosiphon pisum (strain 5AT).